Here is a 477-residue protein sequence, read N- to C-terminus: uncharacterized protein (477 aa).

Positions 1–18 (MWTALVLVWISSVPLSRS) are cleaved as a signal peptide. The Extracellular segment spans residues 19–427 (HTVPAVPRHL…DPLTPSLVNK (409 aa)). 3 N-linked (GlcNAc...) asparagine glycosylation sites follow: Asn-40, Asn-51, and Asn-77. 3 disordered regions span residues 79–103 (TRVT…GTAD), 239–366 (GTIN…TGGP), and 378–398 (KATA…DVKV). A compositionally biased stretch (low complexity) spans 85-97 (TTPHGTNTSTPTT). Polar residues-rich tracts occupy residues 253–288 (PAKS…QPVH) and 298–309 (PSNTTLEPNTPK). Asn-300 carries an N-linked (GlcNAc...) asparagine glycan. 3 stretches are compositionally biased toward low complexity: residues 310–326 (SVAS…QVQT), 348–361 (TSPT…LPTQ), and 378–393 (KATA…SRSS). Residues 428 to 448 (MFLLVVLIVGVTLFIAVLMMF) form a helical membrane-spanning segment. Residues 449–477 (ALQAYESYKKKDYTQVDYLINGMYADSEM) are Cytoplasmic-facing.

It is found in the cell membrane. The protein localises to the golgi apparatus. Its subcellular location is the trans-Golgi network membrane. This is an uncharacterized protein from Rattus norvegicus (Rat).